The primary structure comprises 509 residues: Scavenger receptor class B member 1 (509 aa).

The Cytoplasmic segment spans residues methionine 1–alanine 11. A helical membrane pass occupies residues alanine 12–valine 32. The Extracellular segment spans residues proline 33–lysine 439. Residues asparagine 102, asparagine 108, asparagine 173, asparagine 212, asparagine 255, asparagine 310, asparagine 330, and asparagine 383 are each glycosylated (N-linked (GlcNAc...) asparagine). The cysteines at positions 251 and 384 are disulfide-linked. A helical transmembrane segment spans residues valine 440–isoleucine 460. The Cytoplasmic portion of the chain corresponds to valine 461–leucine 509.

The protein belongs to the CD36 family. The C-terminal region binds to PDZK1. N-glycosylated. Post-translationally, the six cysteines of the extracellular domain are all involved in intramolecular disulfide bonds.

Its subcellular location is the cell membrane. It is found in the membrane. The protein resides in the caveola. Its function is as follows. Receptor for different ligands such as phospholipids, cholesterol ester, lipoproteins, phosphatidylserine and apoptotic cells. Receptor for HDL, mediating selective uptake of cholesteryl ether and HDL-dependent cholesterol efflux. Also facilitates the flux of free and esterified cholesterol between the cell surface and apoB-containing lipoproteins and modified lipoproteins, although less efficiently than HDL. May be involved in the phagocytosis of apoptotic cells, via its phosphatidylserine binding activity. The polypeptide is Scavenger receptor class B member 1 (SCARB1) (Sus scrofa (Pig)).